Here is a 506-residue protein sequence, read N- to C-terminus: Exopolysaccharide phosphotransferase NFA_48680 (506 aa).

The segment at 484–506 (PAPWERVSAPSRRPLPESTAGAA) is disordered.

It belongs to the stealth family.

This Nocardia farcinica (strain IFM 10152) protein is Exopolysaccharide phosphotransferase NFA_48680.